A 203-amino-acid chain; its full sequence is Small ribosomal subunit protein uS7B (203 aa).

This sequence belongs to the universal ribosomal protein uS7 family. As to quaternary structure, component of the small ribosomal subunit (SSU). Mature yeast ribosomes consist of a small (40S) and a large (60S) subunit. The 40S small subunit contains 1 molecule of ribosomal RNA (18S rRNA) and at least 33 different proteins. The large 60S subunit contains 3 rRNA molecules (25S, 5.8S and 5S rRNA) and at least 46 different proteins.

Its subcellular location is the cytoplasm. Component of the ribosome, a large ribonucleoprotein complex responsible for the synthesis of proteins in the cell. The small ribosomal subunit (SSU) binds messenger RNAs (mRNAs) and translates the encoded message by selecting cognate aminoacyl-transfer RNA (tRNA) molecules. The large subunit (LSU) contains the ribosomal catalytic site termed the peptidyl transferase center (PTC), which catalyzes the formation of peptide bonds, thereby polymerizing the amino acids delivered by tRNAs into a polypeptide chain. The nascent polypeptides leave the ribosome through a tunnel in the LSU and interact with protein factors that function in enzymatic processing, targeting, and the membrane insertion of nascent chains at the exit of the ribosomal tunnel. The polypeptide is Small ribosomal subunit protein uS7B (rps502) (Schizosaccharomyces pombe (strain 972 / ATCC 24843) (Fission yeast)).